Consider the following 376-residue polypeptide: UDP-N-acetylglucosamine--N-acetylmuramyl-(pentapeptide) pyrophosphoryl-undecaprenol N-acetylglucosamine transferase (376 aa).

Residues 11-13, N117, R160, S208, and Q310 each bind UDP-N-acetyl-alpha-D-glucosamine; that span reads TGG.

Belongs to the glycosyltransferase 28 family. MurG subfamily.

It is found in the cell inner membrane. It catalyses the reaction di-trans,octa-cis-undecaprenyl diphospho-N-acetyl-alpha-D-muramoyl-L-alanyl-D-glutamyl-meso-2,6-diaminopimeloyl-D-alanyl-D-alanine + UDP-N-acetyl-alpha-D-glucosamine = di-trans,octa-cis-undecaprenyl diphospho-[N-acetyl-alpha-D-glucosaminyl-(1-&gt;4)]-N-acetyl-alpha-D-muramoyl-L-alanyl-D-glutamyl-meso-2,6-diaminopimeloyl-D-alanyl-D-alanine + UDP + H(+). The protein operates within cell wall biogenesis; peptidoglycan biosynthesis. Functionally, cell wall formation. Catalyzes the transfer of a GlcNAc subunit on undecaprenyl-pyrophosphoryl-MurNAc-pentapeptide (lipid intermediate I) to form undecaprenyl-pyrophosphoryl-MurNAc-(pentapeptide)GlcNAc (lipid intermediate II). The chain is UDP-N-acetylglucosamine--N-acetylmuramyl-(pentapeptide) pyrophosphoryl-undecaprenol N-acetylglucosamine transferase from Rickettsia conorii (strain ATCC VR-613 / Malish 7).